We begin with the raw amino-acid sequence, 444 residues long: Tol-Pal system protein TolB (444 aa).

The first 18 residues, 1–18 (MRNIIYFILLLFSCTGYA), serve as a signal peptide directing secretion.

It belongs to the TolB family. In terms of assembly, the Tol-Pal system is composed of five core proteins: the inner membrane proteins TolA, TolQ and TolR, the periplasmic protein TolB and the outer membrane protein Pal. They form a network linking the inner and outer membranes and the peptidoglycan layer.

The protein localises to the periplasm. In terms of biological role, part of the Tol-Pal system, which plays a role in outer membrane invagination during cell division and is important for maintaining outer membrane integrity. The polypeptide is Tol-Pal system protein TolB (Rickettsia canadensis (strain McKiel)).